The primary structure comprises 294 residues: Flavin-dependent thymidylate synthase (294 aa).

The 224-residue stretch at 27–250 (GFIRVIDYMG…PFVYEAFEEY (224 aa)) folds into the ThyX domain. FAD is bound by residues Thr73, 96–98 (RHR), and Glu104. DUMP contacts are provided by residues 93–96 (QWIR), 104–108 (EYSAR), and Arg189. Residues 96–106 (RHRTASVNEYS) carry the ThyX motif motif. FAD is bound by residues 205–207 (NLH) and His211. Position 216 (Arg216) interacts with dUMP. Arg216 (involved in ionization of N3 of dUMP, leading to its activation) is an active-site residue.

It belongs to the thymidylate synthase ThyX family. Homotetramer. FAD serves as cofactor.

The catalysed reaction is dUMP + (6R)-5,10-methylene-5,6,7,8-tetrahydrofolate + NADPH + H(+) = dTMP + (6S)-5,6,7,8-tetrahydrofolate + NADP(+). Its pathway is pyrimidine metabolism; dTTP biosynthesis. In terms of biological role, catalyzes the reductive methylation of 2'-deoxyuridine-5'-monophosphate (dUMP) to 2'-deoxythymidine-5'-monophosphate (dTMP) while utilizing 5,10-methylenetetrahydrofolate (mTHF) as the methyl donor, and NADPH and FADH(2) as the reductant. The polypeptide is Flavin-dependent thymidylate synthase (Rickettsia conorii (strain ATCC VR-613 / Malish 7)).